The sequence spans 254 residues: 4-hydroxy-tetrahydrodipicolinate reductase (254 aa).

Residue 7-12 coordinates NAD(+); sequence GASGRI. NADP(+) is bound at residue Arg35. Residues 91 to 93 and 115 to 118 each bind NAD(+); these read GTT and AHNM. Residue His147 is the Proton donor/acceptor of the active site. Position 148 (His148) interacts with (S)-2,3,4,5-tetrahydrodipicolinate. The active-site Proton donor is Lys151. 157–158 is a binding site for (S)-2,3,4,5-tetrahydrodipicolinate; sequence GT.

This sequence belongs to the DapB family.

It localises to the cytoplasm. It catalyses the reaction (S)-2,3,4,5-tetrahydrodipicolinate + NAD(+) + H2O = (2S,4S)-4-hydroxy-2,3,4,5-tetrahydrodipicolinate + NADH + H(+). It carries out the reaction (S)-2,3,4,5-tetrahydrodipicolinate + NADP(+) + H2O = (2S,4S)-4-hydroxy-2,3,4,5-tetrahydrodipicolinate + NADPH + H(+). Its pathway is amino-acid biosynthesis; L-lysine biosynthesis via DAP pathway; (S)-tetrahydrodipicolinate from L-aspartate: step 4/4. Functionally, catalyzes the conversion of 4-hydroxy-tetrahydrodipicolinate (HTPA) to tetrahydrodipicolinate. This chain is 4-hydroxy-tetrahydrodipicolinate reductase, found in Helicobacter pylori (strain ATCC 700392 / 26695) (Campylobacter pylori).